An 89-amino-acid chain; its full sequence is Small ribosomal subunit protein uS15 (89 aa).

It belongs to the universal ribosomal protein uS15 family. In terms of assembly, part of the 30S ribosomal subunit. Forms a bridge to the 50S subunit in the 70S ribosome, contacting the 23S rRNA.

In terms of biological role, one of the primary rRNA binding proteins, it binds directly to 16S rRNA where it helps nucleate assembly of the platform of the 30S subunit by binding and bridging several RNA helices of the 16S rRNA. Its function is as follows. Forms an intersubunit bridge (bridge B4) with the 23S rRNA of the 50S subunit in the ribosome. This is Small ribosomal subunit protein uS15 from Acinetobacter baylyi (strain ATCC 33305 / BD413 / ADP1).